The primary structure comprises 172 residues: Adenine phosphoribosyltransferase (172 aa).

Belongs to the purine/pyrimidine phosphoribosyltransferase family. In terms of assembly, homodimer.

The protein resides in the cytoplasm. The catalysed reaction is AMP + diphosphate = 5-phospho-alpha-D-ribose 1-diphosphate + adenine. The protein operates within purine metabolism; AMP biosynthesis via salvage pathway; AMP from adenine: step 1/1. In terms of biological role, catalyzes a salvage reaction resulting in the formation of AMP, that is energically less costly than de novo synthesis. The sequence is that of Adenine phosphoribosyltransferase from Lactiplantibacillus plantarum (strain ATCC BAA-793 / NCIMB 8826 / WCFS1) (Lactobacillus plantarum).